A 657-amino-acid chain; its full sequence is MTETPRDNSATRARWQTCLKLARELLLVGPDDKDLKLSYLHTLIDTGRLGPTHHPRKKILVIGAGITGLVAGRLLKDAGYDVTIIEANESRVGGRIKTFRATKHHQPFDDAAQYAEAGAMRLPDFHPLVLALVDKLGLGRRQFYNVDVGPSTGSGPEVPVPPVTYTSFTGQTWTNGDDSPDFREPDKRGNSWIRANRVQVRRADYTASPERINEGFHLTGDEVRAPVVKMVDDALESVRDYYSDVVDGKRVNKPFDEWVEGWARVIRDFDGYSMGGFLRDHAGLSDEAIEAVGTLENTSSRLHLSFFHSFLSRSDINPTVRYWEIPGGSWRLPHALHEGLRDEVRLGHRMIRLEYHDPSRDADPEGTAVGPDGWGVTVETVAENDPQAPPRRWTADLAIVTIPFSALRFVEIVPSMSYKKRRAIVETHYDSATKVLLEFSHRWWEFTEDDWREELERIAPGVYEYYRLGPEAAGEPARMPTLAEADAGLLGAAVKDSGVTEEMRQIGSTMPLRGPALRPATHSFGGGSATDNPNRFMYYPSHRVEGSTGGVVLASYSWSDDAARWDSMRSAERYVYALRNLQALHGRRIEVFFTGRGATKSWARDPYAFGEAAIYTAHQMTSFHLDASRPEGPVHFAGEHTSLKHAWIEGALEVHTA.

The first 12 residues, 1–12 (MTETPRDNSATR), serve as a signal peptide directing secretion. FAD contacts are provided by glutamate 86, alanine 87, arginine 95, methionine 120, arginine 121, methionine 350, glutamate 639, tryptophan 647, and isoleucine 648.

This sequence belongs to the flavin monoamine oxidase family. LGOX subfamily. In terms of assembly, the mature enzyme is a heterohexamer composed of 2 alpha chains, 2 beta chains and 2 gamma chains (alpha2beta2gamma2). The cofactor is FAD. In terms of processing, the precursor form is proteolytically cleaved by an endopeptidase into alpha, beta and gamma chains, which form the stable mature enzyme.

Its subcellular location is the secreted. It carries out the reaction L-glutamate + O2 + H2O = H2O2 + 2-oxoglutarate + NH4(+). Proteinase K-treated enzyme exhibits improved affinity for the substrate, increased activity and increased thermostability. Functionally, catalyzes the oxidative deamination of L-glutamate to 2-ketoglutarate along with the production of ammonia and hydrogen peroxide. Exhibits strict specificity for L-glutamate, and shows only very weak activity with L-glutamine. This is L-glutamate oxidase precursor from Streptomyces diastatochromogenes.